Reading from the N-terminus, the 256-residue chain is 2-C-methyl-D-erythritol 4-phosphate cytidylyltransferase (256 aa).

It belongs to the IspD/TarI cytidylyltransferase family. IspD subfamily.

The catalysed reaction is 2-C-methyl-D-erythritol 4-phosphate + CTP + H(+) = 4-CDP-2-C-methyl-D-erythritol + diphosphate. The protein operates within isoprenoid biosynthesis; isopentenyl diphosphate biosynthesis via DXP pathway; isopentenyl diphosphate from 1-deoxy-D-xylulose 5-phosphate: step 2/6. Catalyzes the formation of 4-diphosphocytidyl-2-C-methyl-D-erythritol from CTP and 2-C-methyl-D-erythritol 4-phosphate (MEP). This is 2-C-methyl-D-erythritol 4-phosphate cytidylyltransferase from Corynebacterium glutamicum (strain R).